We begin with the raw amino-acid sequence, 159 residues long: Transcription antitermination protein NusB (159 aa).

The tract at residues 1–20 (MNKNTQGKPSGKPVRRDGVD) is disordered.

Belongs to the NusB family.

Involved in transcription antitermination. Required for transcription of ribosomal RNA (rRNA) genes. Binds specifically to the boxA antiterminator sequence of the ribosomal RNA (rrn) operons. The protein is Transcription antitermination protein NusB of Stenotrophomonas maltophilia (strain R551-3).